Consider the following 196-residue polypeptide: HTH-type transcriptional regulator Hpr (196 aa).

An HTH marR-type domain is found at 13–157 (SIVFSHKMAL…LICIVRHIYG (145 aa)). The H-T-H motif DNA-binding region spans 63 to 86 (ISDIASHGVMHVSTAFNFSKKLEA).

As to quaternary structure, homodimer.

Negative regulator of protease production and sporulation. This Shouchella clausii (strain KSM-K16) (Alkalihalobacillus clausii) protein is HTH-type transcriptional regulator Hpr.